Here is a 271-residue protein sequence, read N- to C-terminus: MPELPEVETALRGISPYLKNFTIEKVVVRKPKLRWAVSEELITLKNVKIVDLTRRAKYLIIHTEKGYIIGHLGMSGSVRIVPQDSAIDKHDHIDIVVNNGKLLRYNDPRRFGAWLWTENLDDFHLFLKLGPEPLSDEFNAEYLFKKSRQKSTALKTFLMDNAVVVGVGNIYANESLFICGIHPLKLAKNLTRNQCFSLVNTIKDVLRKAIIQGGTTLKDFLQPDGRPGYFAQELLVYGNKDKPCPKCGGKIESLIIGQRNSFFCPKCQKRG.

Pro-2 functions as the Schiff-base intermediate with DNA in the catalytic mechanism. Glu-3 (proton donor) is an active-site residue. Residue Lys-57 is the Proton donor; for beta-elimination activity of the active site. DNA contacts are provided by His-90, Arg-109, and Lys-150. The FPG-type zinc finger occupies 235–269; it reads LVYGNKDKPCPKCGGKIESLIIGQRNSFFCPKCQK. Arg-259 (proton donor; for delta-elimination activity) is an active-site residue.

This sequence belongs to the FPG family. Monomer. It depends on Zn(2+) as a cofactor.

It carries out the reaction Hydrolysis of DNA containing ring-opened 7-methylguanine residues, releasing 2,6-diamino-4-hydroxy-5-(N-methyl)formamidopyrimidine.. The enzyme catalyses 2'-deoxyribonucleotide-(2'-deoxyribose 5'-phosphate)-2'-deoxyribonucleotide-DNA = a 3'-end 2'-deoxyribonucleotide-(2,3-dehydro-2,3-deoxyribose 5'-phosphate)-DNA + a 5'-end 5'-phospho-2'-deoxyribonucleoside-DNA + H(+). In terms of biological role, involved in base excision repair of DNA damaged by oxidation or by mutagenic agents. Acts as a DNA glycosylase that recognizes and removes damaged bases. Has a preference for oxidized purines, such as 7,8-dihydro-8-oxoguanine (8-oxoG). Has AP (apurinic/apyrimidinic) lyase activity and introduces nicks in the DNA strand. Cleaves the DNA backbone by beta-delta elimination to generate a single-strand break at the site of the removed base with both 3'- and 5'-phosphates. The chain is Formamidopyrimidine-DNA glycosylase from Haemophilus influenzae (strain 86-028NP).